The following is a 431-amino-acid chain: 3-phosphoshikimate 1-carboxyvinyltransferase (431 aa).

3 residues coordinate 3-phosphoshikimate: Lys23, Ser24, and Arg28. Lys23 serves as a coordination point for phosphoenolpyruvate. Phosphoenolpyruvate contacts are provided by Gly96 and Arg124. 4 residues coordinate 3-phosphoshikimate: Ser169, Gln171, Asp317, and Lys344. Position 171 (Gln171) interacts with phosphoenolpyruvate. Residue Asp317 is the Proton acceptor of the active site. Phosphoenolpyruvate contacts are provided by Arg348 and Arg390.

The protein belongs to the EPSP synthase family. Monomer.

The protein localises to the cytoplasm. The enzyme catalyses 3-phosphoshikimate + phosphoenolpyruvate = 5-O-(1-carboxyvinyl)-3-phosphoshikimate + phosphate. It functions in the pathway metabolic intermediate biosynthesis; chorismate biosynthesis; chorismate from D-erythrose 4-phosphate and phosphoenolpyruvate: step 6/7. Functionally, catalyzes the transfer of the enolpyruvyl moiety of phosphoenolpyruvate (PEP) to the 5-hydroxyl of shikimate-3-phosphate (S3P) to produce enolpyruvyl shikimate-3-phosphate and inorganic phosphate. This is 3-phosphoshikimate 1-carboxyvinyltransferase from Syntrophotalea carbinolica (strain DSM 2380 / NBRC 103641 / GraBd1) (Pelobacter carbinolicus).